Reading from the N-terminus, the 411-residue chain is Peptidase T (411 aa).

His78 lines the Zn(2+) pocket. Asp80 is a catalytic residue. Residue Asp140 coordinates Zn(2+). The active-site Proton acceptor is the Glu173. Positions 174, 196, and 379 each coordinate Zn(2+).

This sequence belongs to the peptidase M20B family. Zn(2+) is required as a cofactor.

The protein localises to the cytoplasm. The catalysed reaction is Release of the N-terminal residue from a tripeptide.. Cleaves the N-terminal amino acid of tripeptides. In Yersinia pestis bv. Antiqua (strain Antiqua), this protein is Peptidase T.